Here is a 349-residue protein sequence, read N- to C-terminus: MSVTADGRRMLRIEAKNAETPIESKPRWIRTTAKVGPEYRDIKNRVKGAGLHTVCQEAGCPNINECWEDREATFLIGGDTCSRRCDFCQIKSGRPSPLDMDEPRRVAENVREMGLRYATITGVTRDDLDDEGAWLYAEVVKKIHELNPNTGVENLTPDFSNRPELLKVVFDSQPEVFAHNLETVPRIFKRIRPAFKYDRSLEVIQAAHDYGLVTKSNLILGMGEKKEEVRAAIKDLADAGTDILTITQYLRPSSMHHPIERWVKPEEFMEHSDAAYELGIKAVMSGPLVRSSYRAGRLYAQAKQARGEAIPENLKHLEETLDSTTSQEASTLLERYGASEDTPVTASRR.

[4Fe-4S] cluster contacts are provided by C55, C60, C66, C81, C85, C88, and S292. A Radical SAM core domain is found at 67–281 (WEDREATFLI…SDAAYELGIK (215 aa)). The interval 321–349 (LDSTTSQEASTLLERYGASEDTPVTASRR) is disordered.

This sequence belongs to the radical SAM superfamily. Lipoyl synthase family. Requires [4Fe-4S] cluster as cofactor.

Its subcellular location is the cytoplasm. It catalyses the reaction [[Fe-S] cluster scaffold protein carrying a second [4Fe-4S](2+) cluster] + N(6)-octanoyl-L-lysyl-[protein] + 2 oxidized [2Fe-2S]-[ferredoxin] + 2 S-adenosyl-L-methionine + 4 H(+) = [[Fe-S] cluster scaffold protein] + N(6)-[(R)-dihydrolipoyl]-L-lysyl-[protein] + 4 Fe(3+) + 2 hydrogen sulfide + 2 5'-deoxyadenosine + 2 L-methionine + 2 reduced [2Fe-2S]-[ferredoxin]. The protein operates within protein modification; protein lipoylation via endogenous pathway; protein N(6)-(lipoyl)lysine from octanoyl-[acyl-carrier-protein]: step 2/2. In terms of biological role, catalyzes the radical-mediated insertion of two sulfur atoms into the C-6 and C-8 positions of the octanoyl moiety bound to the lipoyl domains of lipoate-dependent enzymes, thereby converting the octanoylated domains into lipoylated derivatives. This is Lipoyl synthase from Corynebacterium jeikeium (strain K411).